Consider the following 319-residue polypeptide: Ferrochelatase (319 aa).

Residues H193 and E274 each coordinate Fe cation.

This sequence belongs to the ferrochelatase family.

Its subcellular location is the cytoplasm. The catalysed reaction is heme b + 2 H(+) = protoporphyrin IX + Fe(2+). Its pathway is porphyrin-containing compound metabolism; protoheme biosynthesis; protoheme from protoporphyrin-IX: step 1/1. In terms of biological role, catalyzes the ferrous insertion into protoporphyrin IX. The polypeptide is Ferrochelatase (Actinobacillus pleuropneumoniae serotype 5b (strain L20)).